Here is a 1722-residue protein sequence, read N- to C-terminus: Signal-induced proliferation-associated 1-like protein 2 (1722 aa).

Disordered stretches follow at residues 1-29 (MSDP…RTMQ) and 44-72 (SMGP…TPAV). Gly residues predominate over residues 57-66 (EGGGGGGGPA). Phosphoserine occurs at positions 149, 380, and 384. The disordered stretch occupies residues 362-405 (ASAASQTPVPVGPAGGCESPLGSKEDLNSKENPDADEGDGKSND). Over residues 384–403 (SKEDLNSKENPDADEGDGKS) the composition is skewed to basic and acidic residues. Positions 596–813 (LLKLDEQGLS…RTRQEYLKDL (218 aa)) constitute a Rap-GAP domain. Residues 951–1027 (EMTLRRNGLG…VKVVIIQPHE (77 aa)) enclose the PDZ domain. Ser1030 bears the Phosphoserine mark. Disordered stretches follow at residues 1068–1246 (HRVP…FGSG) and 1331–1360 (GSMG…SKST). Low complexity-rich tracts occupy residues 1091 to 1103 (LQCQ…AQAA) and 1120 to 1131 (SSPSNQSSSSDP). Basic and acidic residues predominate over residues 1195-1218 (YKERVLQKDGSCKESPNKLSHIGD). Positions 1220 to 1237 (SCSSHSSSNTLSSNTSSN) are enriched in low complexity. The residue at position 1245 (Ser1245) is a Phosphoserine. The span at 1331–1355 (GSMGDLSEVSSHSSGSQHSGSPSAH) shows a compositional bias: low complexity. A phosphoserine mark is found at Ser1461, Ser1472, Ser1478, Ser1488, Ser1549, Ser1552, and Ser1591. Residues 1652–1712 (STLTGKVNQL…ATAQLRKFTE (61 aa)) are a coiled coil.

The protein is Signal-induced proliferation-associated 1-like protein 2 (Sipa1l2) of Mus musculus (Mouse).